The following is a 548-amino-acid chain: Asparagine--tRNA ligase, cytoplasmic (548 aa).

The interval 1–25 (MVLAELYVSDREGSDATGDGTKEKP) is disordered. The segment covering 8 to 25 (VSDREGSDATGDGTKEKP) has biased composition (basic and acidic residues). Ser-61 is modified (phosphoserine). The interval 69-91 (MWHREQMKSESREKKEAEDSLRR) is disordered. Residues 71 to 91 (HREQMKSESREKKEAEDSLRR) show a composition bias toward basic and acidic residues. Lys-244 bears the N6-acetyllysine mark. At Ser-482 the chain carries Phosphoserine. Lys-490 is modified (N6-acetyllysine).

The protein belongs to the class-II aminoacyl-tRNA synthetase family. In terms of assembly, homodimer.

It is found in the cytoplasm. The enzyme catalyses tRNA(Asn) + L-asparagine + ATP = L-asparaginyl-tRNA(Asn) + AMP + diphosphate + H(+). In terms of biological role, catalyzes the attachment of asparagine to tRNA(Asn) in a two-step reaction: asparagine is first activated by ATP to form Asn-AMP and then transferred to the acceptor end of tRNA(Asn). In addition to its essential role in protein synthesis, acts as a signaling molecule that induced migration of CCR3-expressing cells. Has an essential role in the development of the cerebral cortex, being required for proper proliferation of radial glial cells. The protein is Asparagine--tRNA ligase, cytoplasmic of Homo sapiens (Human).